The sequence spans 130 residues: Ribosome-binding factor A (130 aa).

It belongs to the RbfA family. Monomer. Binds 30S ribosomal subunits, but not 50S ribosomal subunits or 70S ribosomes.

The protein resides in the cytoplasm. Functionally, one of several proteins that assist in the late maturation steps of the functional core of the 30S ribosomal subunit. Associates with free 30S ribosomal subunits (but not with 30S subunits that are part of 70S ribosomes or polysomes). Required for efficient processing of 16S rRNA. May interact with the 5'-terminal helix region of 16S rRNA. In Flavobacterium johnsoniae (strain ATCC 17061 / DSM 2064 / JCM 8514 / BCRC 14874 / CCUG 350202 / NBRC 14942 / NCIMB 11054 / UW101) (Cytophaga johnsonae), this protein is Ribosome-binding factor A.